A 121-amino-acid polypeptide reads, in one-letter code: Aspartate 1-decarboxylase (121 aa).

Ser25 (schiff-base intermediate with substrate; via pyruvic acid) is an active-site residue. Ser25 is modified (pyruvic acid (Ser)). Thr57 contributes to the substrate binding site. Residue Tyr58 is the Proton donor of the active site. 73-75 lines the substrate pocket; that stretch reads GAA.

Belongs to the PanD family. As to quaternary structure, heterooctamer of four alpha and four beta subunits. Pyruvate serves as cofactor. In terms of processing, is synthesized initially as an inactive proenzyme, which is activated by self-cleavage at a specific serine bond to produce a beta-subunit with a hydroxyl group at its C-terminus and an alpha-subunit with a pyruvoyl group at its N-terminus.

It localises to the cytoplasm. It carries out the reaction L-aspartate + H(+) = beta-alanine + CO2. It participates in cofactor biosynthesis; (R)-pantothenate biosynthesis; beta-alanine from L-aspartate: step 1/1. Its function is as follows. Catalyzes the pyruvoyl-dependent decarboxylation of aspartate to produce beta-alanine. The chain is Aspartate 1-decarboxylase from Wolinella succinogenes (strain ATCC 29543 / DSM 1740 / CCUG 13145 / JCM 31913 / LMG 7466 / NCTC 11488 / FDC 602W) (Vibrio succinogenes).